Reading from the N-terminus, the 143-residue chain is Transcriptional regulator MraZ (143 aa).

SpoVT-AbrB domains are found at residues 5 to 47 (SHTP…PLAE) and 76 to 119 (ASDD…DSQR).

Belongs to the MraZ family. Forms oligomers.

The protein localises to the cytoplasm. Its subcellular location is the nucleoid. The polypeptide is Transcriptional regulator MraZ (Parafrankia sp. (strain EAN1pec)).